The sequence spans 178 residues: Small ribosomal subunit protein bS16 (178 aa).

The interval 78-178 (KLGITQWTAG…AAPAEGEEQA (101 aa)) is disordered. A compositionally biased stretch (basic and acidic residues) spans 91 to 113 (KKGEPGQKAKERAEERAQREADR). Positions 114-127 (AAAAAEAAAAPAEE) are enriched in low complexity. Acidic residues predominate over residues 128–139 (APAEEAPAEEAA). Over residues 140 to 172 (AEAAPEAAAAEEAPAAEAAAEEAAPAAEEAAPA) the composition is skewed to low complexity.

This sequence belongs to the bacterial ribosomal protein bS16 family.

This Phenylobacterium zucineum (strain HLK1) protein is Small ribosomal subunit protein bS16.